Reading from the N-terminus, the 361-residue chain is Spermatogenesis-associated protein 17 (361 aa).

3 IQ domains span residues 32–61 (ENDA…IVTI), 55–84 (LNRI…VAYY), and 91–120 (YNAM…LKEY).

The protein resides in the cytoplasm. The polypeptide is Spermatogenesis-associated protein 17 (SPATA17) (Macaca fascicularis (Crab-eating macaque)).